The chain runs to 251 residues: FKBP-type peptidyl-prolyl cis-trans isomerase FkpA (251 aa).

Positions Ser-164–Lys-251 constitute a PPIase FKBP-type domain.

This sequence belongs to the FKBP-type PPIase family.

The enzyme catalyses [protein]-peptidylproline (omega=180) = [protein]-peptidylproline (omega=0). Its function is as follows. PPIases accelerate the folding of proteins. It catalyzes the cis-trans isomerization of proline imidic peptide bonds in oligopeptides. The polypeptide is FKBP-type peptidyl-prolyl cis-trans isomerase FkpA (fkpA) (Buchnera aphidicola subsp. Baizongia pistaciae (strain Bp)).